A 303-amino-acid chain; its full sequence is Dehydrodolichyl diphosphate synthase 1 (303 aa).

A helical membrane pass occupies residues 14-34; it reads LLFLFLIPCLFITSYIGFPVF.

Belongs to the UPP synthase family. Mg(2+) serves as cofactor. Expressed in low levels in the whole plant. Preferentially expressed in roots.

The protein resides in the endoplasmic reticulum membrane. The catalysed reaction is n isopentenyl diphosphate + (2E,6E)-farnesyl diphosphate = a di-trans,poly-cis-polyprenyl diphosphate + n diphosphate. The protein operates within protein modification; protein glycosylation. In terms of biological role, catalyzes cis-prenyl chain elongation to produce the polyprenyl backbone of dolichol, a glycosyl carrier-lipid required for the biosynthesis of several classes of glycoprotein. The chain is Dehydrodolichyl diphosphate synthase 1 (DPS) from Arabidopsis thaliana (Mouse-ear cress).